A 635-amino-acid polypeptide reads, in one-letter code: Extracellular metalloproteinase 1 (635 aa).

The first 19 residues, 1–19, serve as a signal peptide directing secretion; that stretch reads MHGLLLAAGLLSLPLHVLA. Positions 20–246 are excised as a propeptide; it reads HPQPSTSTSL…VHNVVDYVAH (227 aa). A glycan (N-linked (GlcNAc...) asparagine) is linked at Asn287. His430 contributes to the Zn(2+) binding site. Glu431 is a catalytic residue. Zn(2+) is bound at residue His434. 3 N-linked (GlcNAc...) asparagine glycosylation sites follow: Asn475, Asn594, and Asn623.

This sequence belongs to the peptidase M36 family. Zn(2+) serves as cofactor.

Its subcellular location is the secreted. Secreted metalloproteinase probably acting as a virulence factor. This Trichophyton rubrum (Athlete's foot fungus) protein is Extracellular metalloproteinase 1 (MEP1).